The sequence spans 243 residues: 1-(5-phosphoribosyl)-5-[(5-phosphoribosylamino)methylideneamino] imidazole-4-carboxamide isomerase (243 aa).

The Proton acceptor role is filled by Asp-8. The Proton donor role is filled by Asp-129.

Belongs to the HisA/HisF family.

The protein resides in the cytoplasm. It carries out the reaction 1-(5-phospho-beta-D-ribosyl)-5-[(5-phospho-beta-D-ribosylamino)methylideneamino]imidazole-4-carboxamide = 5-[(5-phospho-1-deoxy-D-ribulos-1-ylimino)methylamino]-1-(5-phospho-beta-D-ribosyl)imidazole-4-carboxamide. The protein operates within amino-acid biosynthesis; L-histidine biosynthesis; L-histidine from 5-phospho-alpha-D-ribose 1-diphosphate: step 4/9. The protein is 1-(5-phosphoribosyl)-5-[(5-phosphoribosylamino)methylideneamino] imidazole-4-carboxamide isomerase of Geobacter sp. (strain M21).